Here is a 429-residue protein sequence, read N- to C-terminus: Forkhead box protein P3 (429 aa).

Residues 1-67 (MPNPRPAKPM…SSLNPLPPSQ (67 aa)) form a disordered region. Serine 19 is subject to Phosphoserine; by CDK2. Lysine 31 carries the N6-acetyllysine modification. Residues 56 to 67 (TSSSLNPLPPSQ) are compositionally biased toward low complexity. The Nuclear export signal motif lies at 67–75 (QLQLPTVPL). Positions 91–95 (LQALL) match the LXXLL motif motif. Positions 105–189 (LSTVDAHAQT…SNLLAAPQGS (85 aa)) are essential for transcriptional repressor activity and for interaction with KAT5 and HDAC7. The interval 148 to 198 (LPPGINVASLEWVSREPALLCTFPRSGTPRKDSNLLAAPQGSYPLLANGVC) is interaction with IKZF4. The residue at position 175 (threonine 175) is a Phosphothreonine; by CDK2. The segment at 196–221 (GVCKWPGCEKVFEEPEEFLKHCQADH) adopts a C2H2-type zinc-finger fold. The short motif at 238-247 (VQSLEQQLEL) is the Nuclear export signal element. A leucine-zipper region spans residues 238–259 (VQSLEQQLELEKEKLGAMQAHL). Glycyl lysine isopeptide (Lys-Gly) (interchain with G-Cter in ubiquitin) cross-links involve residues lysine 249 and lysine 251. 2 positions are modified to N6-acetyllysine; alternate: lysine 262 and lysine 267. Glycyl lysine isopeptide (Lys-Gly) (interchain with G-Cter in ubiquitin); alternate cross-links involve residues lysine 262 and lysine 267. The segment at 277 to 336 (SSCCIVATSTQGSVLPAWSAPREAPDGGLFAVRRHLWGSHGNSSFPEFFHNMDYFKYHNM) is interaction with RUNX1. Residues 337-423 (RPPFTYATLI…RKKRSQRPNK (87 aa)) constitute a DNA-binding region (fork-head). A Glycyl lysine isopeptide (Lys-Gly) (interchain with G-Cter in ubiquitin) cross-link involves residue lysine 393. The short motif at 414–417 (RKKR) is the Nuclear localization signal element. Serine 418 carries the post-translational modification Phosphoserine. Positions 418–429 (SQRPNKCSNPCP) are excised as a propeptide.

As to quaternary structure, homodimer. Dimerization is essential for its transcriptional regulator activity. Interacts with IKZF3. Interacts (via LXXLL motif) with isoform 4 of RORA (via AF-2 motif). Interacts with STUB1 and HSPA1A/B. Interacts with IKZF4, HDAC7 and KAT5. Interacts with RUNX1, RUNX2, RUNX3 and NFATC2. Interacts with RORC. Interacts with HDAC9 in the absence of T-cell stimulation. Interacts with RELA, PPP1CA, PPP1CB, PPP1CG, HSPA8 and USP7. Post-translationally, acetylation on lysine residues stabilizes FOXP3 and promotes differentiation of T-cells into induced regulatory T-cells (iTregs) associated with suppressive functions. Acetylation is mediated by a coordinated action of KAT5 and EP300/p300 acetyltransferases: EP300/p300 is required to enhance KAT5 autoacetylation, promoting acetylation of FOXP3 by KAT5. Deacetylated by SIRT1. In terms of processing, polyubiquitinated, leading to its proteasomal degradation in regulatory T-cells (Treg) which is mediated by STUB1 in a HSPA1A/B-dependent manner. Deubiquitinated by USP7 and USP44 leading to increase in protein stability. Phosphorylation at Ser-418 regulates its transcriptional repressor activity and consequently, regulatory T-cells (Treg) suppressive function. Phosphorylation by CDK2 negatively regulates its transcriptional activity and protein stability. Post-translationally, undergoes proteolytic cleavage in activated regulatory T-cells (Treg), and can be cleaved at either the N- or C-terminal site, or at both sites. Treg expressing the form cleaved at C-terminal site or both N- and C-terminal sites exhibit an increased induction of IL10 and an increased capacity to suppress proliferation of conventional T-cells in vitro. Treg expressing the form cleaved at only the C-terminal site are highly effective at preventing experimental colitis in an in vivo model of inflammatory bowel disease. In terms of tissue distribution, high level of expression in thymus and spleen.

Its subcellular location is the nucleus. It is found in the cytoplasm. In terms of biological role, transcriptional regulator which is crucial for the development and inhibitory function of regulatory T-cells (Treg). Plays an essential role in maintaining homeostasis of the immune system by allowing the acquisition of full suppressive function and stability of the Treg lineage, and by directly modulating the expansion and function of conventional T-cells. Can act either as a transcriptional repressor or a transcriptional activator depending on its interactions with other transcription factors, histone acetylases and deacetylases. The suppressive activity of Treg involves the coordinate activation of many genes, including CTLA4 and TNFRSF18 by FOXP3 along with repression of genes encoding cytokines such as interleukin-2 (IL2) and interferon-gamma (IFNG). Inhibits cytokine production and T-cell effector function by repressing the activity of two key transcription factors, RELA and NFATC2. Mediates transcriptional repression of IL2 via its association with histone acetylase KAT5 and histone deacetylase HDAC7. Can activate the expression of TNFRSF18, IL2RA and CTLA4 and repress the expression of IL2 and IFNG via its association with transcription factor RUNX1. Inhibits the differentiation of IL17 producing helper T-cells (Th17) by antagonizing RORC function, leading to down-regulation of IL17 expression, favoring Treg development. Inhibits the transcriptional activator activity of RORA. Can repress the expression of IL2 and IFNG via its association with transcription factor IKZF4. In Mus musculus (Mouse), this protein is Forkhead box protein P3 (Foxp3).